We begin with the raw amino-acid sequence, 210 residues long: Orotate phosphoribosyltransferase (210 aa).

5-phospho-alpha-D-ribose 1-diphosphate is bound by residues R97, K98, and 125-133 (NDMVSSGKS). S129 and R157 together coordinate orotate.

Belongs to the purine/pyrimidine phosphoribosyltransferase family. PyrE subfamily. Homodimer. Mg(2+) serves as cofactor.

It catalyses the reaction orotidine 5'-phosphate + diphosphate = orotate + 5-phospho-alpha-D-ribose 1-diphosphate. The protein operates within pyrimidine metabolism; UMP biosynthesis via de novo pathway; UMP from orotate: step 1/2. In terms of biological role, catalyzes the transfer of a ribosyl phosphate group from 5-phosphoribose 1-diphosphate to orotate, leading to the formation of orotidine monophosphate (OMP). The chain is Orotate phosphoribosyltransferase from Chlamydia pneumoniae (Chlamydophila pneumoniae).